The primary structure comprises 260 residues: tRNA pseudouridine synthase A (260 aa).

Aspartate 52 acts as the Nucleophile in catalysis. Residue tyrosine 111 coordinates substrate.

This sequence belongs to the tRNA pseudouridine synthase TruA family. Homodimer.

The enzyme catalyses uridine(38/39/40) in tRNA = pseudouridine(38/39/40) in tRNA. Its function is as follows. Formation of pseudouridine at positions 38, 39 and 40 in the anticodon stem and loop of transfer RNAs. The sequence is that of tRNA pseudouridine synthase A from Beijerinckia indica subsp. indica (strain ATCC 9039 / DSM 1715 / NCIMB 8712).